Consider the following 200-residue polypeptide: Potassium-transporting ATPase KdpC subunit (200 aa).

Residues 7-27 (PALVMIVLFTILTGLIYPLAM) traverse the membrane as a helical segment.

This sequence belongs to the KdpC family. In terms of assembly, the system is composed of three essential subunits: KdpA, KdpB and KdpC.

The protein localises to the cell inner membrane. Its function is as follows. Part of the high-affinity ATP-driven potassium transport (or Kdp) system, which catalyzes the hydrolysis of ATP coupled with the electrogenic transport of potassium into the cytoplasm. This subunit acts as a catalytic chaperone that increases the ATP-binding affinity of the ATP-hydrolyzing subunit KdpB by the formation of a transient KdpB/KdpC/ATP ternary complex. This is Potassium-transporting ATPase KdpC subunit from Methylocella silvestris (strain DSM 15510 / CIP 108128 / LMG 27833 / NCIMB 13906 / BL2).